The sequence spans 1162 residues: MPKRTDIKSILIIGAGPIVIGQACEFDYSGTQACKALKEEGYRIILVNSNPATIMTDPDLADATYIEPITPEVVAKIIAKERPDAILPTMGGQTALNTALSLRRMGVLERYNVEMIGAKAEAIDKAEDRALFREAMKKIGLDTPGSMLANATEIKDEDRKRHEAKRAEVKAQFSGDELDKALDKLETEWQLGEVERKQRYMSHALAKAAQALDVVGLPAIIRPSFTLGGTGGGIAYNRQEFFEIIERGLDASPTTEVLIEESVLGWKEYEMEVVRDHADNCIIICSIENLDPMGVHTGDSITVAPALTLTDKEYQIMRNASIAVLREIGVETGGSNVQFAINPANGRMIVIEMNPRVSRSSALASKATGFPIAKVAAKLAVGYTLDELDNDITGGATPASFEPSIDYVVTKIPRFAFEKFPGSSPILTTAMKSVGEVMAIGRTFQESLQKALRGLETGLTGFDEIAIPNIEEGDEKNAIRAAIGTPTPDCLRMVAQAMRLGLSVEQVHDASKIDPWFLEQIESIVKTEERIREHGLPQDAENLRMLKAMGFSDARLASLTAKDAEDVAKLRADLDVHPVYKRIDTCAAEFASPTAYMYSTYETPFVGQPRSEAEVSDRKKVVILGGGPNRIGQGIEFDYCCCHAAFALGDADYEAIMVNCNPETVSTDYDTSDRLYFEPLTAEDVLEILRVEKQKGTLHGVIVQFGGQTPLKLANALEKAGIPILGTSPDAIDLAEDRDRFQKLLIKLDLNQPKNGIAYSVEQARLVAADLGFPLVVRPSYVLGGRAMQIIHDERGLQAYLLDTVPELVPEDIKAKYPNDKTGQINTLLGKNPLLFDTYLTEAIEVDVDCLCDGKDSLVAGIMEHIEEAGIHSGDSACSLPVHTLSPEIVAELERQTAALATALHVGGLMNVQFAIKDGEIFILEVNPRASRTVPFVAKTVGTPIAKVAARIMAGESLEAAFDAYGGKPQPTARPHIAVKEAVFPFARFPGVDTLLGPEMRSTGEVMGLDYDYALAFAKAQLGAGVELPREGTVFVSVRDEDKERVLGPVRKLASIGFKVMATGGTQKFLEANGVESTKINKVIEGRPHVEDAIRNRQIHLVFNTTDSASAVSDSKSIRRATLMQKLPYYTTMAGAESAAEAIAALKAGSLEVRPLQDYFRS.

A carboxyphosphate synthetic domain region spans residues 1-456 (MPKRTDIKSI…SLQKALRGLE (456 aa)). Arg-129, Arg-222, Gly-228, Gly-229, Glu-261, Val-263, Glu-268, Gly-294, Val-295, His-296, Gln-338, and Glu-352 together coordinate ATP. Residues 186-381 (ETEWQLGEVE…IAKVAAKLAV (196 aa)) enclose the ATP-grasp 1 domain. Mg(2+) is bound by residues Gln-338, Glu-352, and Asn-354. Gln-338, Glu-352, and Asn-354 together coordinate Mn(2+). The oligomerization domain stretch occupies residues 457 to 613 (TGLTGFDEIA…PFVGQPRSEA (157 aa)). Positions 614–1025 (EVSDRKKVVI…AFAKAQLGAG (412 aa)) are carbamoyl phosphate synthetic domain. The 213-residue stretch at 742-954 (QKLLIKLDLN…IAKVAARIMA (213 aa)) folds into the ATP-grasp 2 domain. Residues Arg-778, Thr-838, Leu-840, Glu-845, Gly-870, Ile-871, His-872, Ser-873, Gln-913, and Glu-925 each contribute to the ATP site. 3 residues coordinate Mg(2+): Gln-913, Glu-925, and Asn-927. Mn(2+) contacts are provided by Gln-913, Glu-925, and Asn-927. One can recognise an MGS-like domain in the interval 1026–1162 (VELPREGTVF…VRPLQDYFRS (137 aa)). Residues 1026–1162 (VELPREGTVF…VRPLQDYFRS (137 aa)) form an allosteric domain region.

This sequence belongs to the CarB family. Composed of two chains; the small (or glutamine) chain promotes the hydrolysis of glutamine to ammonia, which is used by the large (or ammonia) chain to synthesize carbamoyl phosphate. Tetramer of heterodimers (alpha,beta)4. Requires Mg(2+) as cofactor. It depends on Mn(2+) as a cofactor.

It carries out the reaction hydrogencarbonate + L-glutamine + 2 ATP + H2O = carbamoyl phosphate + L-glutamate + 2 ADP + phosphate + 2 H(+). The catalysed reaction is hydrogencarbonate + NH4(+) + 2 ATP = carbamoyl phosphate + 2 ADP + phosphate + 2 H(+). It functions in the pathway amino-acid biosynthesis; L-arginine biosynthesis; carbamoyl phosphate from bicarbonate: step 1/1. It participates in pyrimidine metabolism; UMP biosynthesis via de novo pathway; (S)-dihydroorotate from bicarbonate: step 1/3. Functionally, large subunit of the glutamine-dependent carbamoyl phosphate synthetase (CPSase). CPSase catalyzes the formation of carbamoyl phosphate from the ammonia moiety of glutamine, carbonate, and phosphate donated by ATP, constituting the first step of 2 biosynthetic pathways, one leading to arginine and/or urea and the other to pyrimidine nucleotides. The large subunit (synthetase) binds the substrates ammonia (free or transferred from glutamine from the small subunit), hydrogencarbonate and ATP and carries out an ATP-coupled ligase reaction, activating hydrogencarbonate by forming carboxy phosphate which reacts with ammonia to form carbamoyl phosphate. The sequence is that of Carbamoyl phosphate synthase large chain from Brucella suis biovar 1 (strain 1330).